We begin with the raw amino-acid sequence, 166 residues long: Chemoreceptor glutamine deamidase CheD (166 aa).

It belongs to the CheD family. Forms a complex with CheC.

The catalysed reaction is L-glutaminyl-[protein] + H2O = L-glutamyl-[protein] + NH4(+). Its function is as follows. Deamidates glutamine residues to glutamate on methyl-accepting chemotaxis receptors (MCPs). CheD-mediated MCP deamidation is required for productive communication of the conformational signals of the chemoreceptors to the CheA kinase. The sequence is that of Chemoreceptor glutamine deamidase CheD from Bacillus velezensis (strain DSM 23117 / BGSC 10A6 / LMG 26770 / FZB42) (Bacillus amyloliquefaciens subsp. plantarum).